The chain runs to 381 residues: L-lactate dehydrogenase (381 aa).

The FMN hydroxy acid dehydrogenase domain occupies Met-1–Gly-380. Tyr-24 provides a ligand contact to substrate. FMN-binding residues include Ser-106 and Gln-127. Tyr-129 lines the substrate pocket. Thr-155 serves as a coordination point for FMN. Substrate is bound at residue Arg-164. Lys-251 contributes to the FMN binding site. His-275 (proton acceptor) is an active-site residue. Residue Arg-278 coordinates substrate. Asp-306 to Arg-330 contacts FMN.

This sequence belongs to the FMN-dependent alpha-hydroxy acid dehydrogenase family. In terms of assembly, homotetramer. Requires FMN as cofactor.

The protein localises to the cell inner membrane. It catalyses the reaction (S)-lactate + A = pyruvate + AH2. Its function is as follows. Catalyzes the conversion of L-lactate to pyruvate. Is coupled to the respiratory chain. The protein is L-lactate dehydrogenase of Pseudomonas aeruginosa (strain UCBPP-PA14).